A 468-amino-acid polypeptide reads, in one-letter code: Glutamate--tRNA ligase 2 (468 aa).

Positions 9–19 (PSPTGHLHIGG) match the 'HIGH' region motif. Zn(2+) is bound by residues Cys-98, Cys-100, Cys-125, and His-127. A 'KMSKS' region motif is present at residues 236 to 240 (RLSKR). Lys-239 is an ATP binding site.

The protein belongs to the class-I aminoacyl-tRNA synthetase family. Glutamate--tRNA ligase type 1 subfamily. In terms of assembly, monomer. Zn(2+) is required as a cofactor.

It localises to the cytoplasm. The enzyme catalyses tRNA(Glu) + L-glutamate + ATP = L-glutamyl-tRNA(Glu) + AMP + diphosphate. Functionally, catalyzes the attachment of glutamate to tRNA(Glu) in a two-step reaction: glutamate is first activated by ATP to form Glu-AMP and then transferred to the acceptor end of tRNA(Glu). The sequence is that of Glutamate--tRNA ligase 2 from Methylococcus capsulatus (strain ATCC 33009 / NCIMB 11132 / Bath).